Consider the following 249-residue polypeptide: Putative ABC transporter ATP-binding protein GSU1281 (249 aa).

The ABC transporter domain maps to 6–236 (VEVRDLCHCY…DELLATCRLE (231 aa)). 39-46 (GANGAGKS) provides a ligand contact to ATP.

It belongs to the ABC transporter superfamily.

Its subcellular location is the cell inner membrane. Its function is as follows. Probably part of an ABC transporter complex. Responsible for energy coupling to the transport system. This is Putative ABC transporter ATP-binding protein GSU1281 from Geobacter sulfurreducens (strain ATCC 51573 / DSM 12127 / PCA).